The sequence spans 423 residues: Imidazolonepropionase (423 aa).

2 residues coordinate Fe(3+): H78 and H80. Zn(2+) is bound by residues H78 and H80. Residues R87, Y150, and H183 each contribute to the 4-imidazolone-5-propanoate site. Y150 serves as a coordination point for N-formimidoyl-L-glutamate. H247 contacts Fe(3+). H247 contacts Zn(2+). E250 is a binding site for 4-imidazolone-5-propanoate. Position 322 (D322) interacts with Fe(3+). D322 contacts Zn(2+). N324 and G326 together coordinate N-formimidoyl-L-glutamate. S327 contributes to the 4-imidazolone-5-propanoate binding site.

This sequence belongs to the metallo-dependent hydrolases superfamily. HutI family. Zn(2+) is required as a cofactor. The cofactor is Fe(3+).

The protein resides in the cytoplasm. The catalysed reaction is 4-imidazolone-5-propanoate + H2O = N-formimidoyl-L-glutamate. It participates in amino-acid degradation; L-histidine degradation into L-glutamate; N-formimidoyl-L-glutamate from L-histidine: step 3/3. Functionally, catalyzes the hydrolytic cleavage of the carbon-nitrogen bond in imidazolone-5-propanoate to yield N-formimidoyl-L-glutamate. It is the third step in the universal histidine degradation pathway. In Bacillus cereus (strain B4264), this protein is Imidazolonepropionase.